We begin with the raw amino-acid sequence, 353 residues long: Photosystem II protein D1 (353 aa).

An N-acetylthreonine modification is found at Thr-2. The residue at position 2 (Thr-2) is a Phosphothreonine. 3 helical membrane-spanning segments follow: residues 29–46, 118–133, and 142–156; these read YIGW…TATS, HFLL…EWEL, and WIAV…AAAA. Residue His-118 participates in chlorophyll a binding. A pheophytin a-binding site is contributed by Tyr-126. [CaMn4O5] cluster-binding residues include Asp-170 and Glu-189. Residues 197–218 traverse the membrane as a helical segment; that stretch reads FHMLGVAGVFGGSLFSAMHGSL. A chlorophyll a-binding site is contributed by His-198. Residues His-215 and 264–265 each bind a quinone; that span reads SF. Position 215 (His-215) interacts with Fe cation. His-272 is a Fe cation binding site. The chain crosses the membrane as a helical span at residues 274-288; the sequence is FLAAWPVVGIWFTAL. [CaMn4O5] cluster is bound by residues His-332, Glu-333, Asp-342, and Ala-344. The propeptide occupies 345 to 353; the sequence is SVEAPSVKA.

Belongs to the reaction center PufL/M/PsbA/D family. As to quaternary structure, PSII is composed of 1 copy each of membrane proteins PsbA, PsbB, PsbC, PsbD, PsbE, PsbF, PsbH, PsbI, PsbJ, PsbK, PsbL, PsbM, PsbT, PsbX, PsbY, PsbZ, Psb30/Ycf12, at least 3 peripheral proteins of the oxygen-evolving complex and a large number of cofactors. It forms dimeric complexes. The D1/D2 heterodimer binds P680, chlorophylls that are the primary electron donor of PSII, and subsequent electron acceptors. It shares a non-heme iron and each subunit binds pheophytin, quinone, additional chlorophylls, carotenoids and lipids. D1 provides most of the ligands for the Mn4-Ca-O5 cluster of the oxygen-evolving complex (OEC). There is also a Cl(-1) ion associated with D1 and D2, which is required for oxygen evolution. The PSII complex binds additional chlorophylls, carotenoids and specific lipids. serves as cofactor. Post-translationally, tyr-161 forms a radical intermediate that is referred to as redox-active TyrZ, YZ or Y-Z. C-terminally processed by CTPA; processing is essential to allow assembly of the oxygen-evolving complex and thus photosynthetic growth.

Its subcellular location is the plastid. It localises to the chloroplast thylakoid membrane. It catalyses the reaction 2 a plastoquinone + 4 hnu + 2 H2O = 2 a plastoquinol + O2. Functionally, photosystem II (PSII) is a light-driven water:plastoquinone oxidoreductase that uses light energy to abstract electrons from H(2)O, generating O(2) and a proton gradient subsequently used for ATP formation. It consists of a core antenna complex that captures photons, and an electron transfer chain that converts photonic excitation into a charge separation. The D1/D2 (PsbA/PsbD) reaction center heterodimer binds P680, the primary electron donor of PSII as well as several subsequent electron acceptors. This Angiopteris evecta (Mule's foot fern) protein is Photosystem II protein D1.